Here is a 237-residue protein sequence, read N- to C-terminus: GATA zinc finger domain-containing protein 18 (237 aa).

Low complexity-rich tracts occupy residues 1–28 and 87–118; these read MAHNNNNNINNNNNNNNNNNNNNNKNNN and NTSTNTTTTTTTTTTTTTTSSPNNNVITPNSN. 3 disordered regions span residues 1 to 31, 78 to 119, and 140 to 186; these read MAHNNNNNINNNNNNNNNNNNNNNKNNNSEY, PTNT…NSNL, and FEEG…GGCS. Positions 140-151 are enriched in acidic residues; the sequence is FEEGDDEEETSS. The segment covering 152 to 167 has biased composition (low complexity); sequence DSDSSSSSSTSSSSSE. The GATA-type zinc-finger motif lies at 185-212; that stretch reads CSICKTQETPYWRKGKDGDKTVYLCNAC.

This chain is GATA zinc finger domain-containing protein 18 (gtaR), found in Dictyostelium discoideum (Social amoeba).